Consider the following 95-residue polypeptide: Citrate lyase acyl carrier protein (95 aa).

Position 14 is an O-(phosphoribosyl dephospho-coenzyme A)serine (Ser-14).

Belongs to the CitD family. As to quaternary structure, oligomer with a subunit composition of (alpha,beta,gamma)6.

It is found in the cytoplasm. Functionally, covalent carrier of the coenzyme of citrate lyase. In Haemophilus influenzae (strain PittEE), this protein is Citrate lyase acyl carrier protein.